The primary structure comprises 297 residues: Counting factor 45-1 (297 aa).

The signal sequence occupies residues 1-20; sequence MNKLISLLLVCLVAIALVNA. Positions 24–235 constitute a Ch-type lysozyme domain; the sequence is IDFDSDTVNS…SASTGSGSGS (212 aa). Active-site residues include aspartate 29, aspartate 119, and glutamate 121. The N-linked (GlcNAc...) asparagine glycan is linked to asparagine 166. The segment at 231-296 is S-G-S motif repeats; sequence SGSGSSSGSS…GSSSGSGSGS (66 aa). Residues 231-297 form a disordered region; it reads SGSGSSSGSS…SSSGSGSGSS (67 aa). Over residues 234 to 275 the composition is skewed to low complexity; sequence GSSSGSSSGSSSGSSSGSGSSSGSGSSSGSSSGSGSGSSSSG. Residues 276–297 are compositionally biased toward gly residues; that stretch reads SGSGSGSSSGSGSSSGSGSGSS.

The protein belongs to the glycosyl hydrolase 25 family. In terms of assembly, monomer. Component of the counting factor (CF) complex, which includes cf60, cf50, cf45-1 and ctnA.

Its subcellular location is the secreted. Its function is as follows. Cell-counting factor that limits the maximum size of the multicellular structure during aggregation. This chain is Counting factor 45-1 (cf45-1), found in Dictyostelium discoideum (Social amoeba).